A 456-amino-acid polypeptide reads, in one-letter code: Phosphomethylpyrimidine synthase (456 aa).

Residues asparagine 80, methionine 109, tyrosine 139, histidine 175, 195 to 197 (SRG), 236 to 239 (DSLR), and glutamate 275 each bind substrate. Histidine 279 provides a ligand contact to Zn(2+). Tyrosine 302 serves as a coordination point for substrate. Histidine 343 is a Zn(2+) binding site. 3 residues coordinate [4Fe-4S] cluster: cysteine 423, cysteine 426, and cysteine 431.

Belongs to the ThiC family. [4Fe-4S] cluster serves as cofactor.

The enzyme catalyses 5-amino-1-(5-phospho-beta-D-ribosyl)imidazole + S-adenosyl-L-methionine = 4-amino-2-methyl-5-(phosphooxymethyl)pyrimidine + CO + 5'-deoxyadenosine + formate + L-methionine + 3 H(+). It participates in cofactor biosynthesis; thiamine diphosphate biosynthesis. Functionally, catalyzes the synthesis of the hydroxymethylpyrimidine phosphate (HMP-P) moiety of thiamine from aminoimidazole ribotide (AIR) in a radical S-adenosyl-L-methionine (SAM)-dependent reaction. This Prochlorococcus marinus subsp. pastoris (strain CCMP1986 / NIES-2087 / MED4) protein is Phosphomethylpyrimidine synthase.